We begin with the raw amino-acid sequence, 289 residues long: Dermonecrotic toxin LarSicTox-betaID1 (289 aa).

The signal sequence occupies residues glutamate 1–glycine 2. A propeptide spanning residues alanine 3–threonine 11 is cleaved from the precursor. Histidine 22 is an active-site residue. Mg(2+)-binding residues include glutamate 42 and aspartate 44. The active-site Nucleophile is the histidine 58. Disulfide bonds link cysteine 62/cysteine 68 and cysteine 64/cysteine 207. Aspartate 102 serves as a coordination point for Mg(2+).

This sequence belongs to the arthropod phospholipase D family. Class II subfamily. Mg(2+) serves as cofactor. As to expression, expressed by the venom gland.

It localises to the secreted. The catalysed reaction is an N-(acyl)-sphingosylphosphocholine = an N-(acyl)-sphingosyl-1,3-cyclic phosphate + choline. It catalyses the reaction N-hexanoyl-sphing-4-enine-1-phosphocholine = N-(hexanoyl)-sphing-4-enine-1,3-cyclic phosphate + choline. It carries out the reaction N-(dodecanoyl)-sphing-4-enine-1-phosphocholine = N-dodecanoyl-sphing-4-enine-1,3-cyclic phosphate + choline. The enzyme catalyses an N-(acyl)-sphingosylphosphoethanolamine = an N-(acyl)-sphingosyl-1,3-cyclic phosphate + ethanolamine. The catalysed reaction is N-dodecanoyl-heptadecasphing-4-enine-1-phosphoethanolamine = N-dodecanoyl-heptadecasphing-4-enine-1,3-cyclic phosphate + ethanolamine. It catalyses the reaction a 1-acyl-sn-glycero-3-phosphocholine = a 1-acyl-sn-glycero-2,3-cyclic phosphate + choline. It carries out the reaction 1-tetradecanoyl-sn-glycero-3-phosphocholine = 1-tetradecanoyl-sn-glycero-2,3-cyclic phosphate + choline. The enzyme catalyses 1-octanoyl-sn-glycero-3-phosphocholine = 1-octanoyl-sn-glycero-2,3-cyclic phosphate + choline. The catalysed reaction is a 1-acyl-sn-glycero-3-phosphoethanolamine = a 1-acyl-sn-glycero-2,3-cyclic phosphate + ethanolamine. It catalyses the reaction 1-tetradecanoyl-sn-glycero-3-phosphoethanolamine = 1-tetradecanoyl-sn-glycero-2,3-cyclic phosphate + ethanolamine. Dermonecrotic toxins cleave the phosphodiester linkage between the phosphate and headgroup of certain phospholipids (sphingolipid and lysolipid substrates), forming an alcohol (often choline) and a cyclic phosphate. This toxin acts on sphingomyelin (SM) and on ceramide phosphoethanolamine (CPE) with high activity. It also acts on lysophosphatidylcholine (LPC) and on lysophosphatidylethanolamine (LPE) with moderate activity. It is not active on lysophosphatidylserine (LPS), and lysophosphatidylglycerol (LPG). It acts by transphosphatidylation, releasing exclusively cyclic phosphate as second products. It is not surprising that spider toxins have affinity for ethanolamine-containing sphingolipids since they are common in insect prey. On mammals, induces dermonecrosis, hemolysis, increased vascular permeability, edema, inflammatory response, and platelet aggregation. The sequence is that of Dermonecrotic toxin LarSicTox-betaID1 from Loxosceles arizonica (Arizona brown spider).